A 198-amino-acid polypeptide reads, in one-letter code: MSETFIYPQANLIAGVDEVGRGPLVGAVVTAAVILDPNRPIVGLADSKKLSEKRRLSLYDEITEKALSWSLGRAEPEEIDQLNILHATMLAMQRAVSGLHIVPDYVLIDGNRCPKLQMPSLAVVKGDSRVAEISAASILAKVTRDREMTELDLLFPEYGFAQHKGYPTAFHLEKLAALGATVHHRRSFGPVKRVLGLV.

One can recognise an RNase H type-2 domain in the interval 11–198 (NLIAGVDEVG…GPVKRVLGLV (188 aa)). Residues D17, E18, and D109 each contribute to the a divalent metal cation site.

The protein belongs to the RNase HII family. Mn(2+) serves as cofactor. Requires Mg(2+) as cofactor.

It localises to the cytoplasm. It catalyses the reaction Endonucleolytic cleavage to 5'-phosphomonoester.. Functionally, endonuclease that specifically degrades the RNA of RNA-DNA hybrids. The chain is Ribonuclease HII from Yersinia pseudotuberculosis serotype O:1b (strain IP 31758).